The sequence spans 330 residues: Probable integrase/recombinase protein MJ0367 (330 aa).

Residues 22–112 (IEETDKIKEY…LLKVFYRVLR (91 aa)) enclose the Core-binding (CB) domain. Positions 136 to 325 (QHYDAVDAEM…RAESLEFIKK (190 aa)) constitute a Tyr recombinase domain. Active-site residues include Arg177, Lys202, His275, Arg278, and His301. The O-(3'-phospho-DNA)-tyrosine intermediate role is filled by Tyr310.

Belongs to the 'phage' integrase family.

This Methanocaldococcus jannaschii (strain ATCC 43067 / DSM 2661 / JAL-1 / JCM 10045 / NBRC 100440) (Methanococcus jannaschii) protein is Probable integrase/recombinase protein MJ0367.